A 391-amino-acid chain; its full sequence is Stearoyl-[acyl-carrier-protein] 9-desaturase 5, chloroplastic (391 aa).

Positions 1 to 20 (MAFAPSHTASPSYCGVAQGG) are disordered. Residues 1–32 (MAFAPSHTASPSYCGVAQGGRRSNGMSPVVAM) constitute a chloroplast transit peptide. Residues glutamate 133, glutamate 171, histidine 174, glutamate 224, glutamate 257, and histidine 260 each coordinate Fe cation.

The protein belongs to the fatty acid desaturase type 2 family. Homodimer. The cofactor is Fe(2+).

It localises to the plastid. Its subcellular location is the chloroplast. It catalyses the reaction octadecanoyl-[ACP] + 2 reduced [2Fe-2S]-[ferredoxin] + O2 + 2 H(+) = (9Z)-octadecenoyl-[ACP] + 2 oxidized [2Fe-2S]-[ferredoxin] + 2 H2O. The protein operates within lipid metabolism; fatty acid metabolism. Its function is as follows. Converts stearoyl-ACP to oleoyl-ACP by introduction of a cis double bond between carbons 9 and 10 of the acyl chain. This is Stearoyl-[acyl-carrier-protein] 9-desaturase 5, chloroplastic from Oryza sativa subsp. indica (Rice).